Reading from the N-terminus, the 359-residue chain is DNA integrity scanning protein DisA (359 aa).

The DAC domain maps to 7-146 (DEVLRQTLAI…NRRYVLEGSD (140 aa)). Residues G74, L92, and 105–109 (TRHRT) contribute to the ATP site.

Belongs to the DisA family. In terms of assembly, homooctamer. Mg(2+) is required as a cofactor.

It catalyses the reaction 2 ATP = 3',3'-c-di-AMP + 2 diphosphate. Functionally, participates in a DNA-damage check-point. DisA forms globular foci that rapidly scan along the chromosomes searching for lesions. Its function is as follows. Also has diadenylate cyclase activity, catalyzing the condensation of 2 ATP molecules into cyclic di-AMP (c-di-AMP). c-di-AMP likely acts as a signaling molecule that may couple DNA integrity with a cellular process. The protein is DNA integrity scanning protein DisA of Kineococcus radiotolerans (strain ATCC BAA-149 / DSM 14245 / SRS30216).